The chain runs to 561 residues: Transmembrane protein 151B (561 aa).

Residues 1 to 10 (MSPPGSAAGE) are compositionally biased toward low complexity. A disordered region spans residues 1–42 (MSPPGSAAGESAGGGGGGGGSGVPEEPMASADEGPAREEQRP). Over residues 11 to 22 (SAGGGGGGGGSG) the composition is skewed to gly residues. The next 2 membrane-spanning stretches (helical) occupy residues 59–79 (CLLL…CHVT) and 106–126 (YVYI…VECW). Residues 489–507 (VNEASCPTEQTRLSSQASM) show a composition bias toward polar residues. The disordered stretch occupies residues 489 to 523 (VNEASCPTEQTRLSSQASMRDNEEDEDEEEAGPPP). Residues 510–519 (NEEDEDEEEA) are compositionally biased toward acidic residues.

This sequence belongs to the TMEM151 family.

It is found in the membrane. In Mus musculus (Mouse), this protein is Transmembrane protein 151B (Tmem151b).